Here is a 64-residue protein sequence, read N- to C-terminus: Temporin-ALg (64 aa).

Positions 1 to 22 (MFTLKKSLLLLFFLGTINLSLC) are cleaved as a signal peptide. The propeptide occupies 23–46 (EQERNAEEERRDDLGERQAEVEKR). Leu-62 carries the leucine amide modification.

Belongs to the frog skin active peptide (FSAP) family. Temporin subfamily. As to expression, expressed by the skin glands.

The protein localises to the secreted. Its function is as follows. Antimicrobial peptide with activity against Gram-positive and Gram-negative bacteria and against fungi. Has been tested against S.aureus (MIC=2.5 ug/mL), B.pumilus (MIC=2.5 ug/mL), B.cereus (MIC=30.0 ug/mL), E.coli (MIC=5.0 ug/mL), B.dysenteriae (MIC=10.0 ug/mL), A.cacoaceticus (MIC=30.0 ug/mL), P.aeruginosa (MIC=7.5 ug/mL) and C.albicans (MIC=1.25 ug/mL). Also shows a weak hemolytic activity. The protein is Temporin-ALg of Amolops loloensis (Lolokou Sucker Frog).